We begin with the raw amino-acid sequence, 189 residues long: MVKMIVGLGNPGSKYEKTKHNIGFMAIDNIVKNLDVTFTDDKNFKAQIGSTFINHEKVYFVKPTTFMNNSGIAVKALLTYYNIDITDLIVIYDDLDMEVSKLRLRSKGSAGGHNGIKSIIAHIGTQEFNRIKVGIGRPLKGMTVINHVMGQFNTEDNIAISLTLDRVVNAVKFYLQENDFEKTMQKFNG.

Tyr-15 provides a ligand contact to tRNA. His-20 functions as the Proton acceptor in the catalytic mechanism. Positions 66, 68, and 114 each coordinate tRNA.

Belongs to the PTH family. In terms of assembly, monomer.

It localises to the cytoplasm. It catalyses the reaction an N-acyl-L-alpha-aminoacyl-tRNA + H2O = an N-acyl-L-amino acid + a tRNA + H(+). Hydrolyzes ribosome-free peptidyl-tRNAs (with 1 or more amino acids incorporated), which drop off the ribosome during protein synthesis, or as a result of ribosome stalling. Its function is as follows. Catalyzes the release of premature peptidyl moieties from peptidyl-tRNA molecules trapped in stalled 50S ribosomal subunits, and thus maintains levels of free tRNAs and 50S ribosomes. This chain is Peptidyl-tRNA hydrolase, found in Streptococcus pyogenes serotype M1.